The following is a 416-amino-acid chain: Phosphoglycerate kinase (416 aa).

Substrate-binding positions include 24–26 (DLN), Arg40, 63–66 (HLGR), Arg122, and Arg162. Residues Lys212, Gly300, Glu331, and 360 to 363 (GGDS) each bind ATP.

Belongs to the phosphoglycerate kinase family. In terms of assembly, monomer.

It is found in the cytoplasm. The enzyme catalyses (2R)-3-phosphoglycerate + ATP = (2R)-3-phospho-glyceroyl phosphate + ADP. It participates in carbohydrate degradation; glycolysis; pyruvate from D-glyceraldehyde 3-phosphate: step 2/5. The protein is Phosphoglycerate kinase of Mycobacterium ulcerans (strain Agy99).